Consider the following 170-residue polypeptide: Peptide deformylase (170 aa).

2 residues coordinate Fe cation: C91 and H133. Residue E134 is part of the active site. Position 137 (H137) interacts with Fe cation.

It belongs to the polypeptide deformylase family. Fe(2+) is required as a cofactor.

It catalyses the reaction N-terminal N-formyl-L-methionyl-[peptide] + H2O = N-terminal L-methionyl-[peptide] + formate. In terms of biological role, removes the formyl group from the N-terminal Met of newly synthesized proteins. Requires at least a dipeptide for an efficient rate of reaction. N-terminal L-methionine is a prerequisite for activity but the enzyme has broad specificity at other positions. The chain is Peptide deformylase from Glaesserella parasuis serovar 5 (strain SH0165) (Haemophilus parasuis).